The primary structure comprises 369 residues: Anhydro-N-acetylmuramic acid kinase (369 aa).

12 to 19 (GTSMDGID) lines the ATP pocket.

It belongs to the anhydro-N-acetylmuramic acid kinase family.

It catalyses the reaction 1,6-anhydro-N-acetyl-beta-muramate + ATP + H2O = N-acetyl-D-muramate 6-phosphate + ADP + H(+). It participates in amino-sugar metabolism; 1,6-anhydro-N-acetylmuramate degradation. Its pathway is cell wall biogenesis; peptidoglycan recycling. Catalyzes the specific phosphorylation of 1,6-anhydro-N-acetylmuramic acid (anhMurNAc) with the simultaneous cleavage of the 1,6-anhydro ring, generating MurNAc-6-P. Is required for the utilization of anhMurNAc either imported from the medium or derived from its own cell wall murein, and thus plays a role in cell wall recycling. This Shewanella sediminis (strain HAW-EB3) protein is Anhydro-N-acetylmuramic acid kinase.